We begin with the raw amino-acid sequence, 404 residues long: Cysteine desulfurase IscS (404 aa).

Pyridoxal 5'-phosphate-binding positions include Ala75–Thr76, Asn155, Gln183, and Ser203–His205. Lys206 carries the post-translational modification N6-(pyridoxal phosphate)lysine. Pyridoxal 5'-phosphate is bound at residue Thr243. Catalysis depends on Cys328, which acts as the Cysteine persulfide intermediate. Cys328 is a [2Fe-2S] cluster binding site.

Belongs to the class-V pyridoxal-phosphate-dependent aminotransferase family. NifS/IscS subfamily. As to quaternary structure, homodimer. Forms a heterotetramer with IscU, interacts with other sulfur acceptors. Pyridoxal 5'-phosphate serves as cofactor.

The protein resides in the cytoplasm. It carries out the reaction (sulfur carrier)-H + L-cysteine = (sulfur carrier)-SH + L-alanine. The protein operates within cofactor biosynthesis; iron-sulfur cluster biosynthesis. In terms of biological role, master enzyme that delivers sulfur to a number of partners involved in Fe-S cluster assembly, tRNA modification or cofactor biosynthesis. Catalyzes the removal of elemental sulfur atoms from cysteine to produce alanine. Functions as a sulfur delivery protein for Fe-S cluster synthesis onto IscU, an Fe-S scaffold assembly protein, as well as other S acceptor proteins. The protein is Cysteine desulfurase IscS of Shewanella baltica (strain OS223).